Here is a 78-residue protein sequence, read N- to C-terminus: Large ribosomal subunit protein bL28 (78 aa).

This sequence belongs to the bacterial ribosomal protein bL28 family.

This chain is Large ribosomal subunit protein bL28, found in Flavobacterium johnsoniae (strain ATCC 17061 / DSM 2064 / JCM 8514 / BCRC 14874 / CCUG 350202 / NBRC 14942 / NCIMB 11054 / UW101) (Cytophaga johnsonae).